The sequence spans 438 residues: MSLMSSSMVLCHCLSFSSQNPDPESSSSSLLRYKPCDSISLWGKRRKKLWRFVPSAEKNNSHTGNNNKRRRSWWQRFFFDDDGNWLGLRDDDIVDETTELAKDDEMSDEEKFETWKRRAEAIVELREGQEEIGDSGVVADVTKKWEDWIVDSDDSFVESWTRDSAGSDDNLELDELTIPDGGLVKMVRDMVLGAEEEDILYEDRIFRYASSKSAKFLAVLILIPWALDFLAHDYLLMPFLDRYVKTVPLAAQTLDVRRNQKLEMVKELNREKARYRLEVEIGKSPPLSDDDLWWEMRGKALELRDEWRLENRKAFANIWSDMVFGISLFVLLYANQGRVALLKFTGYKIINNISDTGKAFLIILITDIFLGYHSESGWETLLEIIMEHYGLEVEQSTITIFICLVPVIMDACVKLWLFKFLPRLSPRVSNIFQEMKRH.

The N-terminal 54 residues, 1 to 54 (MSLMSSSMVLCHCLSFSSQNPDPESSSSSLLRYKPCDSISLWGKRRKKLWRFVP), are a transit peptide targeting the chloroplast. 4 helical membrane passes run 216–236 (FLAVLILIPWALDFLAHDYLL), 314–334 (AFANIWSDMVFGISLFVLLYA), 359–379 (AFLIILITDIFLGYHSESGWE), and 398–418 (ITIFICLVPVIMDACVKLWLF).

It belongs to the CemA family.

It is found in the plastid. It localises to the chloroplast envelope. The protein localises to the chloroplast membrane. It carries out the reaction K(+)(in) + H(+)(out) = K(+)(out) + H(+)(in). The enzyme catalyses Ca(2+)(in) + H(+)(out) = Ca(2+)(out) + H(+)(in). Functionally, promotes K(+)/H(+) antiport activity supporting K(+) efflux to control H(+) homeostasis in chloroplasts. Also able to ensure Ca(2+)/H(+) antiport activity in vitro. Essential for chloroplast pH regulation and optimization of non-photochemical quenching (NPQ), a regulatory mechanism that dissipates excess light energy; acts downstream of PSBS but independently from PGR5 and FLAP1. The chain is Protein DAY-LENGTH-DEPENDENT DELAYED-GREENING 1, chloroplastic from Arabidopsis thaliana (Mouse-ear cress).